Consider the following 256-residue polypeptide: E3 ubiquitin-protein ligase MIR2 (256 aa).

Residues 1 to 83 (MASKDVEEGV…NLWPEMERQE (83 aa)) lie on the Cytoplasmic side of the membrane. An RING-CH-type zinc finger spans residues 7–66 (EEGVEGPICWICREEVGNEGIHPCACTGELDVVHPQCLSTWLTVSRNTACQMCRVIYRTR). Positions 15, 18, 30, 32, 40, 43, 56, and 59 each coordinate Zn(2+). The helical transmembrane segment at 84–104 (IFELFLLMSVVVAGLVGVALC) threads the bilayer. Topologically, residues 105–124 (TWTLLVILTAPAGTFSPGAV) are extracellular. Residues 125-145 (LGFLCFFGFYQIFIVFAFGGI) traverse the membrane as a helical segment. At 146–256 (CRVSGTVRAL…VRKNHPKNNG (111 aa)) the chain is on the cytoplasmic side. The disordered stretch occupies residues 179 to 256 (DNIELTVLVG…VRKNHPKNNG (78 aa)). The span at 193-203 (TDEEPTDESSE) shows a compositional bias: acidic residues. Residues 245-256 (KPVRKNHPKNNG) show a composition bias toward basic residues.

As to quaternary structure, binds human MHC-I, CD86, ICAM1 and CD1D.

Its subcellular location is the host cell membrane. It localises to the host endoplasmic reticulum. It catalyses the reaction S-ubiquitinyl-[E2 ubiquitin-conjugating enzyme]-L-cysteine + [acceptor protein]-L-lysine = [E2 ubiquitin-conjugating enzyme]-L-cysteine + N(6)-ubiquitinyl-[acceptor protein]-L-lysine.. The protein operates within protein modification; protein ubiquitination. In terms of biological role, membrane-bound E3 ubiquitin ligase expressed at the immediate early stage of viral reactivation to mediate polyubiquitination of various host membrane proteins related to the immune response. Promotes ubiquitination and subsequent degradation of host MHC-I, CD86, DC-SIGN and DC-SIGNR, ICAM1 and CD1D molecules, presumably to prevent lysis of infected cells by cytotoxic T-lymphocytes and NK cell. Plays a role in the down-regulation of the host stress-induced NKG2D ligands MICA, MICB and CLEC2B, which enable immune cells expressing the NKG2D receptor to recognize and annihilate infected cells prior to viral spread. Alters monocyte metabolism and proliferation by mediating rapid internalization of cellular growth factor-binding receptor tyrosine kinases from the surface leading to increased signaling. In Homo sapiens (Human), this protein is E3 ubiquitin-protein ligase MIR2 (K5).